The chain runs to 293 residues: Foldase protein PrsA 2 (293 aa).

The signal sequence occupies residues 1–20; sequence MKKKLILGLVMMMALFSLAA. The N-palmitoyl cysteine moiety is linked to residue Cys21. Residue Cys21 is the site of S-diacylglycerol cysteine attachment. A PpiC domain is found at 135 to 226; the sequence is QPDITVSHIL…YGYHIIQMDK (92 aa).

It belongs to the PrsA family.

Its subcellular location is the cell membrane. The catalysed reaction is [protein]-peptidylproline (omega=180) = [protein]-peptidylproline (omega=0). Functionally, plays a major role in protein secretion by helping the post-translocational extracellular folding of several secreted proteins. The polypeptide is Foldase protein PrsA 2 (prsA2) (Listeria monocytogenes serovar 1/2a (strain ATCC BAA-679 / EGD-e)).